The primary structure comprises 325 residues: Aldo-keto reductase family 1 member A1 (325 aa).

At Ala2 the chain carries N-acetylalanine. Ser4 carries the phosphoserine modification. Residues 11–20, Thr21, and Trp22 contribute to the NADP(+) site; that span reads GQKMPLIGLG. The residue at position 38 (Ser38) is a Phosphoserine. Asp45 is a binding site for NADP(+). Tyr50 functions as the Proton donor in the catalytic mechanism. An N6-acetyllysine; alternate modification is found at Lys127. Lys127 bears the N6-succinyllysine; alternate mark. Positions 162, 163, 211, 213, 215, 216, 263, 264, 265, 266, 269, and 273 each coordinate NADP(+). Ser211 is subject to Phosphoserine.

This sequence belongs to the aldo/keto reductase family. Monomer.

It localises to the cytoplasm. The protein resides in the cytosol. Its subcellular location is the apical cell membrane. The enzyme catalyses a primary alcohol + NADP(+) = an aldehyde + NADPH + H(+). It catalyses the reaction L-gulonate + NADP(+) = aldehydo-D-glucuronate + NADPH + H(+). It carries out the reaction L-gulono-1,4-lactone + NADP(+) = D-glucurono-3,6-lactone + NADPH + H(+). The catalysed reaction is allyl alcohol + NADP(+) = acrolein + NADPH + H(+). The enzyme catalyses glycerol + NADP(+) = D-glyceraldehyde + NADPH + H(+). It catalyses the reaction glycerol + NADP(+) = L-glyceraldehyde + NADPH + H(+). It carries out the reaction hydroxyacetone + NADP(+) = methylglyoxal + NADPH + H(+). The catalysed reaction is 3-deoxyfructose + NADP(+) = 3-deoxyglucosone + NADPH + H(+). The enzyme catalyses (R)-mevalonate + NADP(+) = (R)-mevaldate + NADPH + H(+). It catalyses the reaction pyridine 3-methanol + NADP(+) = pyridine-3-carbaldehyde + NADPH + H(+). It carries out the reaction S-nitroso-CoA + NADPH + H(+) = sulfinamide-CoA + NADP(+). The catalysed reaction is S-nitrosoglutathione + NADPH + H(+) = S-(hydroxysulfenamide)glutathione + NADP(+). Its function is as follows. Catalyzes the NADPH-dependent reduction of a wide variety of carbonyl-containing compounds to their corresponding alcohols. Displays enzymatic activity towards endogenous metabolites such as aromatic and aliphatic aldehydes, ketones, monosaccharides and bile acids, with a preference for negatively charged substrates, such as glucuronate and succinic semialdehyde. Plays an important role in ascorbic acid biosynthesis by catalyzing the reduction of D-glucuronic acid and D-glucurono-gamma-lactone. Functions as a detoxifiying enzyme by reducing a range of toxic aldehydes. Reduces methylglyoxal and 3-deoxyglucosone, which are present at elevated levels under hyperglycemic conditions and are cytotoxic. Involved also in the detoxification of lipid-derived aldehydes like acrolein. Plays a role in the activation of procarcinogens, such as polycyclic aromatic hydrocarbon trans-dihydrodiols, and in the metabolism of various xenobiotics and drugs. Also acts as an inhibitor of protein S-nitrosylation by mediating degradation of S-nitroso-coenzyme A (S-nitroso-CoA), a cofactor required to S-nitrosylate proteins. S-nitroso-CoA reductase activity is involved in reprogramming intermediary metabolism in renal proximal tubules, notably by inhibiting protein S-nitrosylation of isoform 2 of PKM (PKM2). Also acts as a S-nitroso-glutathione reductase by catalyzing the NADPH-dependent reduction of S-nitrosoglutathione. Displays no reductase activity towards retinoids. This Bos taurus (Bovine) protein is Aldo-keto reductase family 1 member A1.